Consider the following 457-residue polypeptide: ATP synthase subunit beta (457 aa).

147–154 (GGAGVGKT) is a binding site for ATP.

Belongs to the ATPase alpha/beta chains family. In terms of assembly, F-type ATPases have 2 components, CF(1) - the catalytic core - and CF(0) - the membrane proton channel. CF(1) has five subunits: alpha(3), beta(3), gamma(1), delta(1), epsilon(1). CF(0) has three main subunits: a(1), b(2) and c(9-12). The alpha and beta chains form an alternating ring which encloses part of the gamma chain. CF(1) is attached to CF(0) by a central stalk formed by the gamma and epsilon chains, while a peripheral stalk is formed by the delta and b chains.

The protein resides in the cell inner membrane. The enzyme catalyses ATP + H2O + 4 H(+)(in) = ADP + phosphate + 5 H(+)(out). Produces ATP from ADP in the presence of a proton gradient across the membrane. The catalytic sites are hosted primarily by the beta subunits. This Histophilus somni (strain 129Pt) (Haemophilus somnus) protein is ATP synthase subunit beta.